We begin with the raw amino-acid sequence, 214 residues long: Mexicain (214 aa).

Cystine bridges form between cysteine 22–cysteine 63, cysteine 56–cysteine 95, and cysteine 153–cysteine 200. Cysteine 25 is a catalytic residue. Cysteine 25 contributes to the E64 binding site. Residues histidine 159 and asparagine 175 contribute to the active site.

Belongs to the peptidase C1 family. In terms of tissue distribution, expressed in latex.

The protein resides in the secreted. Cysteine protease. The polypeptide is Mexicain (Jacaratia mexicana (Wild papaya)).